Here is a 189-residue protein sequence, read N- to C-terminus: Putative dihydrofolate reductase (189 aa).

The region spanning 3 to 185 is the DHFR domain; that stretch reads KMNLIVAMDA…LKFEFCKWKV (183 aa). NADP(+) is bound by residues alanine 9 and 15 to 21; that span reads GIGKNGV. Position 29–34 (29–34) interacts with substrate; the sequence is DMQYFA. 53–55 provides a ligand contact to NADP(+); the sequence is RKC. Arginine 69 lines the substrate pocket. NADP(+) is bound by residues 75 to 77 and 115 to 122; these read SRQ and GGAEIYDL.

The protein belongs to the dihydrofolate reductase family.

It catalyses the reaction (6S)-5,6,7,8-tetrahydrofolate + NADP(+) = 7,8-dihydrofolate + NADPH + H(+). It participates in cofactor biosynthesis; tetrahydrofolate biosynthesis; 5,6,7,8-tetrahydrofolate from 7,8-dihydrofolate: step 1/1. In terms of biological role, key enzyme in folate metabolism. Catalyzes an essential reaction for de novo glycine and purine synthesis, and for DNA precursor synthesis. This chain is Putative dihydrofolate reductase (dhfr-1), found in Caenorhabditis elegans.